The following is a 141-amino-acid chain: Cystatin (141 aa).

The first 26 residues, 1–26 (MVHSQLPVAGPLRLLCALLLLPSATM), serve as a signal peptide directing secretion. Residues 29 to 129 (GGLSPRSVTD…CHFQVWSRPW (101 aa)) enclose the Cystatin domain. The short motif at 73 to 77 (QVVSG) is the Secondary area of contact element. Disulfide bonds link Cys91–Cys107 and Cys120–Cys140.

This sequence belongs to the cystatin family. Expressed at a low level by the venom gland (at protein level).

Its subcellular location is the secreted. Functionally, inhibits various C1 cysteine proteases including cathepsin L, papain and cathepsin B. This protein has no toxic activity and its function in the venom is unknown. It may play a role as a housekeeping or regulatory protein. The sequence is that of Cystatin from Pseudechis australis (Mulga snake).